Here is a 98-residue protein sequence, read N- to C-terminus: NADH-ubiquinone oxidoreductase chain 4L (98 aa).

Helical transmembrane passes span 1-21 (MSLV…GLLM), 29-49 (SLLC…IMIL), and 61-81 (IILL…LVMV).

It belongs to the complex I subunit 4L family. Core subunit of respiratory chain NADH dehydrogenase (Complex I) which is composed of 45 different subunits.

It localises to the mitochondrion inner membrane. It catalyses the reaction a ubiquinone + NADH + 5 H(+)(in) = a ubiquinol + NAD(+) + 4 H(+)(out). Core subunit of the mitochondrial membrane respiratory chain NADH dehydrogenase (Complex I) which catalyzes electron transfer from NADH through the respiratory chain, using ubiquinone as an electron acceptor. Part of the enzyme membrane arm which is embedded in the lipid bilayer and involved in proton translocation. This is NADH-ubiquinone oxidoreductase chain 4L (MT-ND4L) from Urotrichus talpoides (Japanese shrew mole).